The following is a 447-amino-acid chain: Chitobiosyldiphosphodolichol beta-mannosyltransferase (447 aa).

Over M1–T2 the chain is Cytoplasmic. A helical; Signal-anchor for type II membrane protein membrane pass occupies residues L3–L23. Over P24–T447 the chain is Lumenal.

The protein belongs to the glycosyltransferase group 1 family. Glycosyltransferase 33 subfamily.

It localises to the endoplasmic reticulum membrane. The enzyme catalyses an N,N'-diacetylchitobiosyl-diphospho-di-trans,poly-cis-dolichol + GDP-alpha-D-mannose = a beta-D-Man-(1-&gt;4)-beta-D-GlcNAc-(1-&gt;4)-alpha-D-GlcNAc-diphospho-di-trans,poly-cis-dolichol + GDP + H(+). It participates in protein modification; protein glycosylation. Functionally, participates in the formation of the lipid-linked precursor oligosaccharide for N-glycosylation. Involved in assembling the dolichol-pyrophosphate-GlcNAc(2)-Man(5) intermediate on the cytoplasmic surface of the ER. In Arthroderma benhamiae (strain ATCC MYA-4681 / CBS 112371) (Trichophyton mentagrophytes), this protein is Chitobiosyldiphosphodolichol beta-mannosyltransferase.